The sequence spans 353 residues: Photosystem II D2 protein (353 aa).

Position 2 is an N-acetylthreonine (Thr2). Thr2 is modified (phosphothreonine). Residues Cys41–Thr61 form a helical membrane-spanning segment. His118 serves as a coordination point for chlorophyll a. The chain crosses the membrane as a helical span at residues Gly125–Pro141. Pheophytin a is bound by residues Gln130 and Asn143. Residues Val153–Ser166 form a helical membrane-spanning segment. His198 is a chlorophyll a binding site. Residues Ala208–Asp228 form a helical membrane-spanning segment. A plastoquinone is bound by residues His215 and Phe262. His215 contacts Fe cation. Residue His269 participates in Fe cation binding. Residues Gly279 to Arg295 form a helical membrane-spanning segment.

It belongs to the reaction center PufL/M/PsbA/D family. In terms of assembly, PSII is composed of 1 copy each of membrane proteins PsbA, PsbB, PsbC, PsbD, PsbE, PsbF, PsbH, PsbI, PsbJ, PsbK, PsbL, PsbM, PsbT, PsbX, PsbY, PsbZ, Psb30/Ycf12, at least 3 peripheral proteins of the oxygen-evolving complex and a large number of cofactors. It forms dimeric complexes. The cofactor is The D1/D2 heterodimer binds P680, chlorophylls that are the primary electron donor of PSII, and subsequent electron acceptors. It shares a non-heme iron and each subunit binds pheophytin, quinone, additional chlorophylls, carotenoids and lipids. There is also a Cl(-1) ion associated with D1 and D2, which is required for oxygen evolution. The PSII complex binds additional chlorophylls, carotenoids and specific lipids..

Its subcellular location is the plastid. It localises to the chloroplast thylakoid membrane. The catalysed reaction is 2 a plastoquinone + 4 hnu + 2 H2O = 2 a plastoquinol + O2. Functionally, photosystem II (PSII) is a light-driven water:plastoquinone oxidoreductase that uses light energy to abstract electrons from H(2)O, generating O(2) and a proton gradient subsequently used for ATP formation. It consists of a core antenna complex that captures photons, and an electron transfer chain that converts photonic excitation into a charge separation. The D1/D2 (PsbA/PsbD) reaction center heterodimer binds P680, the primary electron donor of PSII as well as several subsequent electron acceptors. D2 is needed for assembly of a stable PSII complex. The chain is Photosystem II D2 protein from Nymphaea alba (White water-lily).